We begin with the raw amino-acid sequence, 418 residues long: F-box/kelch-repeat protein SKIP20 (418 aa).

The F-box domain occupies 14 to 61 (DLIPGLPEELAIECLVRVPFQFHSSIKSVCRSWKCVISSRSFIKERIG). The segment at 79–104 (PSPAMMEGGEMSQKKKEEEEGESQMT) is disordered. 4 Kelch repeats span residues 104 to 150 (TQQL…AIQD), 153 to 206 (KVLL…SVGS), 208 to 255 (KVYV…SMAT), and 258 to 314 (GFCV…EFPG).

Part of a SCF (ASK-cullin-F-box) protein ligase complex. Interacts with SKP1A/ASK1 and SPK1B/ASK2.

It is found in the nucleus. It participates in protein modification; protein ubiquitination. Its function is as follows. Component of SCF(ASK-cullin-F-box) E3 ubiquitin ligase complexes, which may mediate the ubiquitination and subsequent proteasomal degradation of target proteins. The sequence is that of F-box/kelch-repeat protein SKIP20 (SKIP20) from Arabidopsis thaliana (Mouse-ear cress).